A 91-amino-acid polypeptide reads, in one-letter code: Putative septation protein SpoVG (91 aa).

It belongs to the SpoVG family.

In terms of biological role, could be involved in septation. In Clostridium botulinum (strain Alaska E43 / Type E3), this protein is Putative septation protein SpoVG.